The sequence spans 535 residues: MEAPTVETPPDPSPPSAPAPALVPLRAPDVARLREEQEKVVTNCQERIQHWKKVDNDYNALRERLSTLPDKLSYNIMVPFGPFAFMPGKLVHTNEVTVLLGDNWFAKCSAKQAVGLVEHRKEHVRKTIDDLKKVMKNFESRVEFTEDLQKMSDAAGDIVDIREEIKCDFEFKAKHRIAHKPHSKPKTSDIFEADIANDVKSKDLLADKELWARLEELERQEELLGELDSKPDTVIANGEDTTSSEEEKEDRNTNVNAMHQVTDSHTPCHKDVASSEPFSGQVNSQLNCSVNGSSSYHSDDDDDDDDDDDDDNIDDDDGDNDHEALGVGDNSIPTIYFSHTVEPKRVRINTGKNTTLKFSEKKEEAKRKRKNSTGSGHSAQELPTIRTPADIYRAFVDVVNGEYVPRKSILKSRSRENSVCSDTSESSAAEFDDRRGVLRSISCEEATCSDTSESILEEEPQENQKKLLPLSVTPEAFSGTVIEKEFVSPSLTPPPAIAHPALPTIPERKEVLLEASEETGKRVSKFKAARLQQKD.

M1 carries the N-acetylmethionine modification. Disordered regions lie at residues 1-23, 223-330, 352-383, and 412-431; these read MEAP…PALV, LLGE…VGDN, KNTT…QELP, and SRSR…AAEF. Residues 7–18 are compositionally biased toward pro residues; that stretch reads ETPPDPSPPSAP. Composition is skewed to polar residues over residues 253-265 and 276-296; these read TNVN…TDSH and EPFS…SSSY. The span at 299–320 shows a compositional bias: acidic residues; that stretch reads DDDDDDDDDDDDDNIDDDDGDN. Position 372 is a phosphoserine; by RPS6KB1 (S372). T373 carries the post-translational modification Phosphothreonine. The span at 417 to 427 shows a compositional bias: polar residues; the sequence is NSVCSDTSESS. S442 bears the Phosphoserine mark.

Belongs to the RNA polymerase II subunit 5-mediating protein family. Homodimer. Component of the PAQosome complex which is responsible for the biogenesis of several protein complexes and which consists of R2TP complex members RUVBL1, RUVBL2, RPAP3 and PIH1D1, URI complex members PFDN2, PFDN6, PDRG1, UXT and URI1 as well as ASDURF, POLR2E and DNAAF10/WDR92. Interacts with POLR2E/RPB5, RUVBL2 and RUVBL1. Interacts with PFDN2, PFDN4 and STAP1; the interactions are phosphorylation-dependent and occur in a growth-dependent manner in the mitochondrion. Interacts with UXT. Interacts with PPP1CC; the interaction is phosphorylation-dependent and occurs in a growth factor-dependent manner. Interacts (via the middle C-terminal region) with GTF2F1 and GTF2F2. Interacts with DMAP1. Interacts with TSC1 and TSC2. Interacts with PRPF8 and EFTUD2 in a ZNHIT2-dependent manner. In terms of processing, phosphorylated. Phosphorylation occurs essentially on serine residues. Phosphorylation occurs in response to androgen treatment in prostate cancer cells in a mTOR-dependent manner. Phosphorylated; hyperhosphorylated in mitochondria in a mTORC-dependent signaling pathway. Phosphorylated at Ser-372 by RPS6KB1 in a growth factor- and rapamycin-dependent manner. S6K1-mediated mitochondrial phosphorylation at Ser-372 disrupts the URI1-PPP1CC complex in the mitochondrion, relieves PPP1CC phosphatase inhibition activity and hence engages a negative feedback diminishing RPS6KB1 kinase activity, preventing sustained S6K1-dependent signaling. As to expression, ubiquitous. Expressed in ovarian cancers (at protein level). Expressed strongly in skeletal muscle. Expressed weakly in brain, heart, pancreas and in prostate epithelial cells.

It localises to the nucleus. It is found in the cytoplasm. The protein resides in the mitochondrion. Its subcellular location is the cell projection. The protein localises to the dendrite. In terms of biological role, involved in gene transcription regulation. Acts as a transcriptional repressor in concert with the corepressor UXT to regulate androgen receptor (AR) transcription. May act as a tumor suppressor to repress AR-mediated gene transcription and to inhibit anchorage-independent growth in prostate cancer cells. Required for cell survival in ovarian cancer cells. Together with UXT, associates with chromatin to the NKX3-1 promoter region. Antagonizes transcriptional modulation via hepatitis B virus X protein. Its function is as follows. Plays a central role in maintaining S6K1 signaling and BAD phosphorylation under normal growth conditions thereby protecting cells from potential deleterious effects of sustained S6K1 signaling. The URI1-PPP1CC complex acts as a central component of a negative feedback mechanism that counteracts excessive S6K1 survival signaling to BAD in response to growth factors. Mediates inhibition of PPP1CC phosphatase activity in mitochondria. Coordinates the regulation of nutrient-sensitive gene expression availability in a mTOR-dependent manner. Seems to be a scaffolding protein able to assemble a prefoldin-like complex that contains PFDs and proteins with roles in transcription and ubiquitination. In Homo sapiens (Human), this protein is Unconventional prefoldin RPB5 interactor 1 (URI1).